Here is a 566-residue protein sequence, read N- to C-terminus: Glucose starvation modulator protein 1 (566 aa).

A DNA-binding region (zn(2)-C6 fungal-type) is located at residues 20 to 48 (CVFCHQKHLQCSNERPCKNCVKRNIAHGC). 2 disordered regions span residues 63–92 (GVPG…SPMD) and 250–270 (KQAS…NTLS). Over residues 253–270 (SPSPSNTSTSENNTNTLS) the composition is skewed to low complexity.

It belongs to the ERT1/acuK family.

The protein resides in the nucleus. In terms of biological role, transcription factor which regulates nonfermentable carbon utilization. In Candida albicans (strain WO-1) (Yeast), this protein is Glucose starvation modulator protein 1 (GSM1).